Here is a 1496-residue protein sequence, read N- to C-terminus: DENN domain-containing protein 4B (1496 aa).

The MABP domain maps to Ala44 to Leu203. Residues Val195 to Pro369 form the uDENN domain. In terms of domain architecture, cDENN spans Pro390–Thr526. One can recognise a dDENN domain in the interval Leu528–Ala644. The interval Gln720–Gln744 is disordered. The segment covering Pro729–Pro739 has biased composition (low complexity). PPR repeat units lie at residues Trp775 to Pro811 and Asp812 to Pro846. Disordered stretches follow at residues Leu891–Ala970, Val995–Arg1055, Pro1067–Trp1119, and Ser1205–Gly1227. Residues Gln896–Gln912 are compositionally biased toward low complexity. 2 stretches are compositionally biased toward polar residues: residues Val913–Ala924 and Arg935–Ala944. Ser953 carries the phosphoserine modification. The segment covering Arg1075–Arg1090 has biased composition (pro residues). Residue Ser1092 is modified to Phosphoserine. Residues Gly1105 to Trp1119 show a composition bias toward low complexity.

The protein resides in the golgi apparatus. In terms of biological role, guanine nucleotide exchange factor (GEF) which may activate RAB10. Promotes the exchange of GDP to GTP, converting inactive GDP-bound Rab proteins into their active GTP-bound form. The protein is DENN domain-containing protein 4B (DENND4B) of Homo sapiens (Human).